A 221-amino-acid polypeptide reads, in one-letter code: Hydrogenase expression/formation protein HupD (221 aa).

Ni(2+)-binding residues include E20, D66, and H97.

The protein belongs to the peptidase A31 family.

Not known. Could be involved in the processing of hydrogenase. This Thiocapsa roseopersicina protein is Hydrogenase expression/formation protein HupD (hupD).